The primary structure comprises 76 residues: Horsegram inhibitor 1 (76 aa).

7 cysteine pairs are disulfide-bonded: cysteine 16/cysteine 70, cysteine 17/cysteine 32, cysteine 20/cysteine 66, cysteine 22/cysteine 30, cysteine 40/cysteine 47, cysteine 44/cysteine 59, and cysteine 49/cysteine 57.

Belongs to the Bowman-Birk serine protease inhibitor family. As to quaternary structure, HGI-III exists in a state of equilibrium between monomer, homodimer and trimer, with homodimer being the predominant form. The homodimer is stabilized by the non-covalent interaction between Lys-24 of one subunit and Asp-76 of the other subunit. The homodimer is more thermostable than the monomer. HGGI-I, HGGI-II and HGGI-III exist as monomers. Post-translationally, HGGI-I, HGGI-II and HGGI-III are produced by proteolysis of the N- and C-termini of HGI-III.

Inhibitors of trypsin and chymotrypsin. HGGI-III has a higher activity than HGGI-I or HGGI-II. This chain is Horsegram inhibitor 1, found in Vigna unguiculata subsp. cylindrica (Horse gram).